Reading from the N-terminus, the 403-residue chain is F-box protein At2g40925 (403 aa).

One can recognise an F-box domain in the interval 21 to 71 (NRHDCEIPPDLMIEILIRLPTKSFMRFKCVSKQWSPLISGRYFCNRLFTCV).

The polypeptide is F-box protein At2g40925 (Arabidopsis thaliana (Mouse-ear cress)).